We begin with the raw amino-acid sequence, 310 residues long: MFKHVTVLLEETVDGLDIKPNGTYVDCTLGGGGHSSYLLSQLTEGGKLIAFDQDEIAIQNAKDKFSSYGEQFIAVKSNFRYLSEKLHELGITEVDGILFDLGVSSPQLDTPERGFSYHHDAPLDMRMDQEAPLTAYDVVNNWSYEQLVRIFFQYGEEKFSKQIARKIEAYREKKKIETTGELVELIKEGIPAPARRTGGHPAKRVFQAIRIAVNDELKVFEEALEAAIEIVKPGGRISVITFHSLEDRICKTTFKRNSTTPELPPGLPIIPEEFKPKLKLITRKPILPSDVELEENNRARSAKLRIAEKR.

S-adenosyl-L-methionine contacts are provided by residues 32–34, D52, F79, D100, and Q107; that span reads GGH.

It belongs to the methyltransferase superfamily. RsmH family.

The protein resides in the cytoplasm. The enzyme catalyses cytidine(1402) in 16S rRNA + S-adenosyl-L-methionine = N(4)-methylcytidine(1402) in 16S rRNA + S-adenosyl-L-homocysteine + H(+). Its function is as follows. Specifically methylates the N4 position of cytidine in position 1402 (C1402) of 16S rRNA. This Bacillus cytotoxicus (strain DSM 22905 / CIP 110041 / 391-98 / NVH 391-98) protein is Ribosomal RNA small subunit methyltransferase H.